The sequence spans 199 residues: IMP cyclohydrolase (199 aa).

The protein belongs to the archaeal IMP cyclohydrolase family.

It catalyses the reaction IMP + H2O = 5-formamido-1-(5-phospho-D-ribosyl)imidazole-4-carboxamide. It functions in the pathway purine metabolism; IMP biosynthesis via de novo pathway; IMP from 5-formamido-1-(5-phospho-D-ribosyl)imidazole-4-carboxamide: step 1/1. Functionally, catalyzes the cyclization of 5-formylamidoimidazole-4-carboxamide ribonucleotide to IMP. This is IMP cyclohydrolase from Methanothrix thermoacetophila (strain DSM 6194 / JCM 14653 / NBRC 101360 / PT) (Methanosaeta thermophila).